The primary structure comprises 475 residues: MAAGTLRGLAVAGGGESSDSEDDGWDIGYLDRSSQKLKRSLPVEEKNETFKKALTTGDISLVKELLDSGINVDSSFRYGWTPLMYAASVANAELVRFLLDRGANASFDKDKLTILISACSARGSEEQVLKCVELLLSRNADPNTACRRLMTPIMYAARDGHTQVVALLVAHGAEVNAQDENGYTALTWAARQGHKNVILKLLELGANKMLQTKDGRTPSEIAKRNKHLEIFNFLSLTLNPLEGKLQQLTKEETICKLLATDSDKEKDHIFSPYTAFGDLEIFLHGLGLEHMTDSLKEKDITLRHLLTMKKDELTKNGIASKDQQKILAALKELEVEEINFGKLPEVTKLEISGDEFLNFLLKLNKQCGHLITAVQNIITELPVNSHKIVLEWASPRNFTSVCEELVSNVEDLNEEVCRLKELIQKMQNERENDPTHIPLVEEVSTWKTRILKRSAVTVCGFGLLLFIGKLTLQRK.

A disordered region spans residues 1–25 (MAAGTLRGLAVAGGGESSDSEDDGW). 3 positions are modified to phosphoserine: Ser17, Ser18, and Ser20. 6 ANK repeats span residues 45 to 74 (EKNE…NVDS), 78 to 107 (YGWT…NASF), 110 to 144 (DKLT…DPNT), 148 to 177 (RLMT…EVNA), 181 to 210 (NGYT…NKML), and 214 to 243 (DGRT…PLEG). The region spanning 272-334 (PYTAFGDLEI…KILAALKELE (63 aa)) is the SAM domain.

In terms of assembly, interacts with DDX4, PIWIL1, RANBP9 and TDRD1. Expressed exclusively in testis and ovary with higher levels in testis.

The protein resides in the cytoplasm. Plays a central role during spermatogenesis by repressing transposable elements and preventing their mobilization, which is essential for the germline integrity. Acts via the piRNA metabolic process, which mediates the repression of transposable elements during meiosis by forming complexes composed of piRNAs and Piwi proteins and governs the methylation and subsequent repression of transposons. Its association with pi-bodies suggests a participation in the primary piRNAs metabolic process. Required prior to the pachytene stage to facilitate the production of multiple types of piRNAs, including those associated with repeats involved in regulation of retrotransposons. May act by mediating protein-protein interactions during germ cell maturation. This Mus musculus (Mouse) protein is Ankyrin repeat, SAM and basic leucine zipper domain-containing protein 1.